Here is a 25-residue protein sequence, read N- to C-terminus: Inorganic pyrophosphatase (25 aa).

Monomer. Mg(2+) serves as cofactor.

It catalyses the reaction diphosphate + H2O = 2 phosphate + H(+). The polypeptide is Inorganic pyrophosphatase (Cyanophora paradoxa).